The sequence spans 369 residues: Galactose-1-phosphate uridylyltransferase (369 aa).

Residues C54 and C57 each coordinate Zn(2+). UDP-alpha-D-glucose is bound by residues A63 and 79–80 (ND). Residue H127 coordinates Zn(2+). UDP-alpha-D-glucose is bound at residue N172. Zn(2+) is bound at residue H183. The Tele-UMP-histidine intermediate role is filled by H185. Q187 is a binding site for UDP-alpha-D-glucose. 4 residues coordinate Fe cation: E201, H300, H317, and H319. UDP-alpha-D-glucose contacts are provided by residues 332-335 (KFCV) and 337-338 (FE).

It belongs to the galactose-1-phosphate uridylyltransferase type 1 family. Homodimer. Requires Zn(2+) as cofactor.

The catalysed reaction is alpha-D-galactose 1-phosphate + UDP-alpha-D-glucose = alpha-D-glucose 1-phosphate + UDP-alpha-D-galactose. The protein operates within carbohydrate metabolism; galactose metabolism. The sequence is that of Galactose-1-phosphate uridylyltransferase (gal7) from Schizosaccharomyces pombe (strain 972 / ATCC 24843) (Fission yeast).